The chain runs to 405 residues: MNYSEIMIRYGELSTKGKNKMRFVNKLRNNIKHVLSVYPEVTVYFDRDRGHVYLNGADYQEVSASLKKIFGIQNFAPSYKIEKSVPALKEAVVEIMQTIYKEGMTFKIAARRSDHSFELDSRDLNQVLGDAVFTAIPNVQVQMKSPDITLRVEIRPDAAYISHEEIKGAGGLPVGTSGKGTLMLSGGIDSPVAGYLALKRGVEIEALHFASPPYTSPGALKKAHDLTRKLTAFGGNITFIEVPFTEIQEEIKEKAPEAYLMTLTRRFMMRITDRVREERGAMVIINGESLGQVASQTLESMQAINAVTNTPVIRPVVTMDKLEIIDIAQEIDTFDISIQPFEDCCTIFAPDRPKTNPKIKNVEQYEARMDVEGLVERAVAGIIVTEITPKEEVKDEVDSLIEDLL.

A THUMP domain is found at 60–165 (QEVSASLKKI…PDAAYISHEE (106 aa)). ATP is bound by residues 183 to 184 (ML), 208 to 209 (HF), Arg-265, Gly-287, and Gln-296.

Belongs to the ThiI family.

The protein resides in the cytoplasm. The enzyme catalyses [ThiI sulfur-carrier protein]-S-sulfanyl-L-cysteine + a uridine in tRNA + 2 reduced [2Fe-2S]-[ferredoxin] + ATP + H(+) = [ThiI sulfur-carrier protein]-L-cysteine + a 4-thiouridine in tRNA + 2 oxidized [2Fe-2S]-[ferredoxin] + AMP + diphosphate. It carries out the reaction [ThiS sulfur-carrier protein]-C-terminal Gly-Gly-AMP + S-sulfanyl-L-cysteinyl-[cysteine desulfurase] + AH2 = [ThiS sulfur-carrier protein]-C-terminal-Gly-aminoethanethioate + L-cysteinyl-[cysteine desulfurase] + A + AMP + 2 H(+). It functions in the pathway cofactor biosynthesis; thiamine diphosphate biosynthesis. Its function is as follows. Catalyzes the ATP-dependent transfer of a sulfur to tRNA to produce 4-thiouridine in position 8 of tRNAs, which functions as a near-UV photosensor. Also catalyzes the transfer of sulfur to the sulfur carrier protein ThiS, forming ThiS-thiocarboxylate. This is a step in the synthesis of thiazole, in the thiamine biosynthesis pathway. The sulfur is donated as persulfide by IscS. In Streptococcus suis (strain 98HAH33), this protein is Probable tRNA sulfurtransferase.